Consider the following 438-residue polypeptide: Fibrinogen gamma chain (438 aa).

The signal sequence occupies residues 1-25 (MTRLPKQGLLLLQSLALLSSAFGNI). Residue N76 is glycosylated (N-linked (GlcNAc...) asparagine). The Fibrinogen C-terminal domain maps to 167–414 (QIQEFTGKDC…SVTMKIMPLN (248 aa)). Cysteines 176 and 205 form a disulfide. Residues D341, D343, and G347 each coordinate Ca(2+). C349 and C362 form a disulfide bridge.

As to quaternary structure, heterohexamer; disulfide linked. Contains 2 sets of 3 non-identical chains (alpha, beta and gamma). The 2 heterotrimers are in head to head conformation with the N-termini in a small central domain. Post-translationally, conversion of fibrinogen to fibrin is triggered by thrombin, which cleaves fibrinopeptides A and B from alpha and beta chains, and thus exposes the N-terminal polymerization sites responsible for the formation of the soft clot. The soft clot is converted into the hard clot by factor XIIIA which catalyzes the epsilon-(gamma-glutamyl)lysine cross-linking between gamma chains (stronger) and between alpha chains (weaker) of different monomers.

The protein resides in the secreted. Its function is as follows. Together with fibrinogen alpha (FGA) and fibrinogen beta (FGB), polymerizes to form an insoluble fibrin matrix. Has a major function in hemostasis as one of the primary components of blood clots. This is Fibrinogen gamma chain (fgg) from Xenopus laevis (African clawed frog).